The chain runs to 562 residues: Thermosome subunit alpha (562 aa).

Disordered stretches follow at residues 1 to 23 and 526 to 551; these read MAQQMGNQPLIVLSEDSQRTSGE and GGQVGDDDGDDGPAGGPGGMGGGMGG. The segment covering 537–551 has biased composition (gly residues); that stretch reads GPAGGPGGMGGGMGG.

This sequence belongs to the TCP-1 chaperonin family. As to quaternary structure, forms an oligomeric complex of eight-membered rings.

Functionally, molecular chaperone; binds unfolded polypeptides in vitro, and has a weak ATPase activity. This is Thermosome subunit alpha (thsA) from Halobacterium salinarum (strain ATCC 700922 / JCM 11081 / NRC-1) (Halobacterium halobium).